Reading from the N-terminus, the 398-residue chain is Tryptophan synthase beta chain (398 aa).

N6-(pyridoxal phosphate)lysine is present on Lys-88.

The protein belongs to the TrpB family. Tetramer of two alpha and two beta chains. It depends on pyridoxal 5'-phosphate as a cofactor.

It carries out the reaction (1S,2R)-1-C-(indol-3-yl)glycerol 3-phosphate + L-serine = D-glyceraldehyde 3-phosphate + L-tryptophan + H2O. It participates in amino-acid biosynthesis; L-tryptophan biosynthesis; L-tryptophan from chorismate: step 5/5. In terms of biological role, the beta subunit is responsible for the synthesis of L-tryptophan from indole and L-serine. The chain is Tryptophan synthase beta chain from Histophilus somni (strain 2336) (Haemophilus somnus).